The following is a 424-amino-acid chain: S-phase kinase-associated protein 2 (424 aa).

Positions 52–73 (PHGLLSNLGHPQSPPRKRVKGK) are disordered. Serine 64 carries the post-translational modification Phosphoserine. The short motif at 67 to 73 (RKRVKGK) is the Nuclear localization signal element. Lysine 68 and lysine 71 each carry N6-acetyllysine; by p300/EP300. Serine 75 carries the post-translational modification Phosphoserine. The F-box domain occupies 94-140 (GVSWDSLPDELLLGIFSCLCLPELLRVSGVCKRWYRLSLDESLWQSL). 10 LRR repeats span residues 151–176 (VTVR…PLGE), 177–204 (SFSS…ILSE), 210–234 (NLSL…NLVR), 235–257 (LNLC…SCSR), 258–284 (LDEL…LPNT), 286–308 (TQLN…IIKR), 309–330 (CPNL…CFPE), 334–356 (LNYL…LLEL), 359–378 (IPTL…TLQL), and 380–401 (REAL…RPTM). Residue serine 179 is modified to Phosphoserine.

Part of a SCF(SKP2) complex consisting of CUL1, RBX1, SKP1 and SKP2. Component of a SCF(SKP2)-like complex containing CUL1, SKP1, TRIM21 and SKP2. Interacts directly with CUL1 and SKP1. Interacts with ASB2 which is the substrate-recognition component of a probable ECS E3 ubiquitin-protein ligase complex; ASB2 is likely to bridge the formation of dimeric E3-ubiquitin-protein ligase complexes composed of an ECS complex and an SCF(SKP2) complex. Interacts with CKS1. Interacts with the cyclin-A-CDK2 complex. Interacts with ORC1, phosphorylated CDT1, phosphorylated RBL2, ELF4, phosphorylated RAG2, FOXO1, UBP43, MYC, TOB1, TAL1 and KMT2A/MLL1. Interacts with TRIM21. Interacts with cyclin-E. Interacts with CARM1. Phosphorylated on serine and threonine resudues in response to DNA damage, promoting 'Lys-63'-linked ubiquitination of NBN. Post-translationally, ubiquitinated by the APC/C complex, leading to its degradation by the proteasome. Deubiquitinated by USP13. In terms of processing, acetylation at Lys-68 and Lys-71 increases stability through impairment of APC/C-mediated proteolysis and promotes cytoplasmic retention. Deacetylated by SIRT3.

It is found in the cytoplasm. The protein localises to the nucleus. The protein operates within protein modification; protein ubiquitination. Substrate recognition component of a SCF (SKP1-CUL1-F-box protein) E3 ubiquitin-protein ligase complex which mediates the ubiquitination and subsequent proteasomal degradation of target proteins involved in cell cycle progression, signal transduction and transcription. Specifically recognizes phosphorylated CDKN1B/p27kip and is involved in regulation of G1/S transition. Degradation of CDKN1B/p27kip also requires CKS1. Recognizes target proteins ORC1, CDT1, RBL2, KMT2A/MLL1, CDK9, RAG2, NBN, FOXO1, UBP43, YTHDF2, and probably MYC, TOB1 and TAL1. Degradation of TAL1 also requires STUB1. Recognizes CDKN1A in association with CCNE1 or CCNE2 and CDK2. Promotes ubiquitination and destruction of CDH1 in a CK1-dependent manner, thereby regulating cell migration. Following phosphorylation in response to DNA damage, mediates 'Lys-63'-linked ubiquitination of NBN, promoting ATM recruitment to DNA damage sites and DNA repair via homologous recombination. In terms of biological role, through the ubiquitin-mediated proteasomal degradation of viral proteins may have an antiviral activity. In Mus musculus (Mouse), this protein is S-phase kinase-associated protein 2 (Skp2).